The following is a 297-amino-acid chain: MSHSDQSQRFLFDDTDVRGEMVDLERSYSEVLAKHPYPEPVAQLLGEMLAAASLLCGTLKFDGLLVLQARSSGAVPLLMVECSSDRQVRGLARYSAESIGADAGMQELMPEGVLTLTVDPVKGQRYQGIVALEGVNLAECLSNYFASSEQLPTRFWLNANGRRARGLLLQQLPADRLKDPEAREASWQHLTTLADTLTAEELLALDNETVLHRLYHEETVRLFEPQPLVFHCSCSRERSANALVSLGQADCERLLEEEEGSITIDCQFCNQRYLFDASDVAQLFAGAGSQGPSETRH.

Disulfide bonds link cysteine 232–cysteine 234 and cysteine 266–cysteine 269.

Belongs to the HSP33 family. Under oxidizing conditions two disulfide bonds are formed involving the reactive cysteines. Under reducing conditions zinc is bound to the reactive cysteines and the protein is inactive.

The protein localises to the cytoplasm. Redox regulated molecular chaperone. Protects both thermally unfolding and oxidatively damaged proteins from irreversible aggregation. Plays an important role in the bacterial defense system toward oxidative stress. The protein is 33 kDa chaperonin of Pseudomonas aeruginosa (strain UCBPP-PA14).